Reading from the N-terminus, the 100-residue chain is Large ribosomal subunit protein bL28 (100 aa).

The protein belongs to the bacterial ribosomal protein bL28 family.

This Gluconacetobacter diazotrophicus (strain ATCC 49037 / DSM 5601 / CCUG 37298 / CIP 103539 / LMG 7603 / PAl5) protein is Large ribosomal subunit protein bL28.